A 701-amino-acid chain; its full sequence is Elongation factor G 1 (701 aa).

The tr-type G domain maps to 5–281; the sequence is SKYRNIGIFA…AVVDYLPSPT (277 aa). GTP is bound by residues 14 to 21, 78 to 82, and 132 to 135; these read AHVDAGKT, DTPGH, and NKLD.

This sequence belongs to the TRAFAC class translation factor GTPase superfamily. Classic translation factor GTPase family. EF-G/EF-2 subfamily.

The protein localises to the cytoplasm. Functionally, catalyzes the GTP-dependent ribosomal translocation step during translation elongation. During this step, the ribosome changes from the pre-translocational (PRE) to the post-translocational (POST) state as the newly formed A-site-bound peptidyl-tRNA and P-site-bound deacylated tRNA move to the P and E sites, respectively. Catalyzes the coordinated movement of the two tRNA molecules, the mRNA and conformational changes in the ribosome. The polypeptide is Elongation factor G 1 (Colwellia psychrerythraea (strain 34H / ATCC BAA-681) (Vibrio psychroerythus)).